The primary structure comprises 378 residues: Formate dehydrogenase 2, mitochondrial (378 aa).

Residues 1–18 constitute a mitochondrion transit peptide; sequence MAMWRAPSAAGQLLGRAL. Substrate contacts are provided by valine 122 and asparagine 146. Residues threonine 147, 201-202, aspartate 221, 256-260, asparagine 282, aspartate 308, and 332-335 contribute to the NAD(+) site; these read RI, PLTEK, and HCSG.

This sequence belongs to the D-isomer specific 2-hydroxyacid dehydrogenase family. FDH subfamily. Homodimer.

It localises to the mitochondrion. It catalyses the reaction formate + NAD(+) = CO2 + NADH. In terms of biological role, catalyzes the NAD(+)-dependent oxidation of formate to carbon dioxide. Involved in the cell stress response. The polypeptide is Formate dehydrogenase 2, mitochondrial (Oryza sativa subsp. japonica (Rice)).